The chain runs to 71 residues: Disintegrin viridin (71 aa).

One can recognise a Disintegrin domain in the interval 1 to 71 (AGEECDCGSP…SADCPRNRFH (71 aa)). Intrachain disulfides connect Cys5–Cys20, Cys7–Cys15, Cys14–Cys37, Cys28–Cys34, Cys33–Cys58, and Cys46–Cys65. The Cell attachment site motif lies at 50–52 (RGD). A disordered region spans residues 50–71 (RGDNPDDRCTGQSADCPRNRFH).

Belongs to the venom metalloproteinase (M12B) family. P-II subfamily. P-IIa sub-subfamily. Monomer (disintegrin). Expressed by the venom gland.

It localises to the secreted. In terms of biological role, inhibits fibrinogen interaction with platelets. Acts by binding to alpha-IIb/beta-3 (ITGA2B/ITGB3) on the platelet surface and inhibits aggregation induced by ADP, thrombin, platelet-activating factor and collagen. This Crotalus viridis viridis (Prairie rattlesnake) protein is Disintegrin viridin.